A 690-amino-acid polypeptide reads, in one-letter code: Guanylate cyclase soluble subunit alpha-1 (690 aa).

Serine 267 is modified (phosphoserine). Residues 481–608 enclose the Guanylate cyclase domain; the sequence is TMLFSDIVGF…NNVTLANKFE (128 aa).

Belongs to the adenylyl cyclase class-4/guanylyl cyclase family. In terms of assembly, the active enzyme is formed by a heterodimer of an alpha and a beta subunit. Heterodimer with GUCY1B1. The cofactor is Mg(2+). Requires Mn(2+) as cofactor.

The protein resides in the cytoplasm. The catalysed reaction is GTP = 3',5'-cyclic GMP + diphosphate. Activated by nitric oxide in the presence of magnesium or manganese ions. The polypeptide is Guanylate cyclase soluble subunit alpha-1 (GUCY1A1) (Canis lupus familiaris (Dog)).